Consider the following 110-residue polypeptide: UPF0122 protein SERP0802 (110 aa).

The protein belongs to the UPF0122 family.

Might take part in the signal recognition particle (SRP) pathway. This is inferred from the conservation of its genetic proximity to ftsY/ffh. May be a regulatory protein. This is UPF0122 protein SERP0802 from Staphylococcus epidermidis (strain ATCC 35984 / DSM 28319 / BCRC 17069 / CCUG 31568 / BM 3577 / RP62A).